Reading from the N-terminus, the 1306-residue chain is Activating transcription factor 7-interacting protein 1 (1306 aa).

Met1 carries the N-acetylmethionine modification. Residues 1–23 (MDSVEEPQKKVFKARKTMRASDR) form a disordered region. Lys33 participates in a covalent cross-link: Glycyl lysine isopeptide (Lys-Gly) (interchain with G-Cter in SUMO2). Phosphoserine is present on residues Ser57 and Ser112. Disordered regions lie at residues 104 to 470 (EDLN…SMET), 496 to 604 (LPVE…SKRR), 689 to 722 (AAKD…NNMT), 765 to 785 (VVSS…PAAP), 871 to 895 (PLPN…NSST), 920 to 1060 (RTSL…GPSQ), and 1152 to 1196 (AGPQ…STSL). Composition is skewed to polar residues over residues 109 to 134 (EALS…SPAS) and 143 to 162 (VSDN…SDNP). Position 124 is a phosphothreonine (Thr124). 3 stretches are compositionally biased toward low complexity: residues 185-212 (EEPP…CSEP), 246-261 (EAAS…ASDE), and 284-303 (PSGD…LPRS). Residues 432–441 (QSEKDEHKSP) show a composition bias toward basic and acidic residues. Ser511, Ser514, Ser516, and Ser533 each carry phosphoserine. Residues 513 to 523 (GSPSKQESSEN) show a composition bias toward polar residues. Composition is skewed to basic and acidic residues over residues 557 to 566 (EGEKSEKDGK), 592 to 601 (KSEDMDSVES), and 689 to 699 (AAKDDLKKRQE). Residues 587 to 605 (RRKRSKSEDMDSVESKRRR) carry the Nuclear localization signal motif. Lys592 is covalently cross-linked (Glycyl lysine isopeptide (Lys-Gly) (interchain with G-Cter in SUMO2)). Ser593 bears the Phosphoserine mark. Residues 596-851 (MDSVESKRRR…NQPSGNVEFI (256 aa)) are interaction with SETDB1. Residues 666 to 696 (NKRHKAVLTELQAKIARLTKRFGAAKDDLKK) are a coiled coil. 2 positions are modified to phosphoserine: Ser700 and Ser707. Positions 713–722 (NDTNSNNNMT) are enriched in polar residues. A compositionally biased stretch (pro residues) spans 871 to 884 (PLPNPTKPNIPSVP). Ser933 is subject to Phosphoserine. Residues Lys944 and Lys974 each participate in a glycyl lysine isopeptide (Lys-Gly) (interchain with G-Cter in SUMO2) cross-link. The segment covering 948–981 (STFSPPSSAEQNSSATPRIVTENQTNKTVDSSIN) has biased composition (polar residues). Residues 987–1000 (STSQSGKASSSDSS) show a composition bias toward low complexity. Positions 1001 to 1011 (GVIDLTMDDEE) are interaction with SUMO. The segment covering 1022–1040 (SPPSSSTVSTSQPMSRPLQ) has biased composition (low complexity). A Fibronectin type-III 1 domain is found at 1054–1143 (PTSGPSQATI…RVPQTTTYVV (90 aa)). Over residues 1170-1187 (PRPLHPAPLPEAPQPQRL) the composition is skewed to pro residues. An interaction with MBD1 region spans residues 1190 to 1306 (EAASTSLPQK…TDVISSSQNS (117 aa)). The Fibronectin type-III 2 domain maps to 1196–1302 (LPQKPHLKLA…DPQSTDVISS (107 aa)).

It belongs to the MCAF family. Interacts with MBD1; the interaction is enhanced when MBD1 is sumoylated. Interacts with SETDB1; the interaction protects SETDB1 from proteasomal degradation and is required to stimulate histone methyltransferase activity and facilitate the conversion of dimethylated to trimethylated H3 'Lys-9'. Interacts with SUMO ubiquitin-like proteins (SUMO1, SUNO2 and SUMO3), with a preference for SUMO2 and SUMO3. Interacts with SP1, ATF7 and ZHX1. Interacts with the general transcription machinery, including ERCC2, ERCC3, GTF2E1, GTF2E2 and POLR2A. Ubiquitously expressed at all stages studied.

The protein localises to the nucleus. In terms of biological role, recruiter that couples transcriptional factors to general transcription apparatus and thereby modulates transcription regulation and chromatin formation. Can both act as an activator or a repressor depending on the context. Required for HUSH-mediated heterochromatin formation and gene silencing. Mediates MBD1-dependent transcriptional repression, probably by recruiting complexes containing SETDB1. Stabilizes SETDB1, is required to stimulate histone methyltransferase activity of SETDB1 and facilitates the conversion of dimethylated to trimethylated H3 'Lys-9' (H3K9me3). The complex formed with MBD1 and SETDB1 represses transcription and couples DNA methylation and histone H3 'Lys-9' trimethylation (H3K9me3). Facilitates telomerase TERT and TERC gene expression by SP1 in cancer cells. This Mus musculus (Mouse) protein is Activating transcription factor 7-interacting protein 1 (Atf7ip).